The following is a 106-amino-acid chain: A-type ATP synthase subunit F (106 aa).

This sequence belongs to the V-ATPase F subunit family. Has multiple subunits with at least A(3), B(3), C, D, E, F, H, I and proteolipid K(x).

The protein localises to the cell membrane. Component of the A-type ATP synthase that produces ATP from ADP in the presence of a proton gradient across the membrane. The sequence is that of A-type ATP synthase subunit F from Methanothermobacter thermautotrophicus (strain ATCC 29096 / DSM 1053 / JCM 10044 / NBRC 100330 / Delta H) (Methanobacterium thermoautotrophicum).